A 147-amino-acid chain; its full sequence is Sec-independent protein translocase protein TatB (147 aa).

Residues 1–21 (MFDIGFWELVVIGVVALVVLG) traverse the membrane as a helical segment. The interval 114-147 (EPVAPISVATPDEEPTVIPAARAQPSAEQGEVKP) is disordered.

This sequence belongs to the TatB family. In terms of assembly, the Tat system comprises two distinct complexes: a TatABC complex, containing multiple copies of TatA, TatB and TatC subunits, and a separate TatA complex, containing only TatA subunits. Substrates initially bind to the TatABC complex, which probably triggers association of the separate TatA complex to form the active translocon.

It is found in the cell inner membrane. In terms of biological role, part of the twin-arginine translocation (Tat) system that transports large folded proteins containing a characteristic twin-arginine motif in their signal peptide across membranes. Together with TatC, TatB is part of a receptor directly interacting with Tat signal peptides. TatB may form an oligomeric binding site that transiently accommodates folded Tat precursor proteins before their translocation. This Aeromonas hydrophila subsp. hydrophila (strain ATCC 7966 / DSM 30187 / BCRC 13018 / CCUG 14551 / JCM 1027 / KCTC 2358 / NCIMB 9240 / NCTC 8049) protein is Sec-independent protein translocase protein TatB.